The following is a 358-amino-acid chain: 3-O-methylredipecamine 2-O-methyltransferase IpeOMT3 (358 aa).

5 residues coordinate S-adenosyl-L-methionine: Gly-193, Asp-216, Asp-236, Met-237, and Lys-250. Residue His-254 is the Proton acceptor of the active site.

It belongs to the class I-like SAM-binding methyltransferase superfamily. Cation-independent O-methyltransferase family. In terms of tissue distribution, expressed in roots.

It is found in the cytoplasm. The protein resides in the cytosol. It catalyses the reaction (S)-reticuline + S-adenosyl-L-methionine = (S)-laudanine + S-adenosyl-L-homocysteine + H(+). Its pathway is alkaloid biosynthesis. In terms of biological role, O-methyltransferase involved in the biosynthesis of ipecac and benzylisoquinoline monoterpenoid-isoquinoline alkaloids natural products, starting by the condensation of dopamine and secologanin, and including emetine and cephaeline, drugs used both as anti-protozoal (e.g. treatment of ameobiasis) and as emetic agents. Catalyzes 2-O-methylation of 3-O-methylredipecamine and, with less efficiency, the 7-O-methylation of (S)-coclaurine, (R,S)-N-methylcoclaurine, (R,S)-4'-O-methylcoclaurine, (R,S)-6-O-methyllaudanosoline, nororientaline, (S)-norreticuline and (S)-reticuline. The sequence is that of 3-O-methylredipecamine 2-O-methyltransferase IpeOMT3 from Carapichea ipecacuanha (Ipecac).